The following is a 57-amino-acid chain: uncharacterized protein (57 aa).

Residues 34–54 (AALLDAAALVVIPGLLTAAAV) form a helical membrane-spanning segment.

Its subcellular location is the membrane. This is an uncharacterized protein from Dictyostelium discoideum (Social amoeba).